A 421-amino-acid polypeptide reads, in one-letter code: Telomeric repeat-binding factor 1 (421 aa).

A disordered region spans residues 1-30 (MAETVSSAARDAPSREGWTDSDSPEQEEVG). Residue A2 is modified to N-acetylalanine. The tract at residues 49–255 (ENAELVAEVE…AATKVVENEK (207 aa)) is TRFH mediates dimerization. K200 participates in a covalent cross-link: Glycyl lysine isopeptide (Lys-Gly) (interchain with G-Cter in SUMO2). Residue S206 is modified to Phosphoserine; by ATM. The interaction with RLIM stretch occupies residues 252 to 365 (ENEKARTQAS…PDTDDKSGRR (114 aa)). Positions 253–266 (NEKARTQASKDRPD) are enriched in basic and acidic residues. Positions 253–366 (NEKARTQASK…DTDDKSGRRK (114 aa)) are disordered. Residues 284-310 (VNGQQSTETEPLVDTVSSIRSHKNALS) show a composition bias toward polar residues. A Nuclear localization signal motif is present at residues 313–367 (KHRRAPSDFSRNEARTGTLQCETTMERNRRTSGRNRLCVSENQPDTDDKSGRRKR). The HTH myb-type domain maps to 362 to 419 (SGRRKRQTWLWEEDRILKCGVKKYGEGNWAKILSHYKFNNRTSVMLKDRWRTMKRLKL). The H-T-H motif DNA-binding region spans 390–415 (WAKILSHYKFNNRTSVMLKDRWRTMK).

As to quaternary structure, homodimer; can contain both isoforms. Found in a complex with POT1; TINF2 and TNKS1. Interacts with ATM, TINF2, TNKS1, TNKS2, PINX1, NEK2 and MAPRE1. Component of the shelterin complex (telosome) composed of TERF1, TERF2, TINF2, TERF2IP ACD and POT1. Interacts with RLIM (via N-terminus). Interacts with FBXO4. Interaction with TINF2 protects against interaction with FBXO4 and subsequent polyubiquitination and proteasomal degradation. Interacts with GNL3L; this interaction promotes homodimerization. Interacts with TIN2. Interactions with GNL3L and TIN2 are mutually exclusive. Interacts with RTEL1. Interacts with CCDC79/TERB1. In terms of processing, phosphorylated preferentially on Ser-219 in an ATM-dependent manner in response to ionizing DNA damage. Post-translationally, ADP-ribosylation by TNKS1 or TNKS2 diminishes its ability to bind to telomeric DNA. Ubiquitinated by RLIM/RNF12, leading to its degradation by the proteasome. Ubiquitinated by a SCF (SKP1-CUL1-F-box protein) ubiquitin-protein ligase complex, leading to its degradation by the proteasome.

The protein localises to the nucleus. It is found in the chromosome. It localises to the telomere. Its subcellular location is the cytoplasm. The protein resides in the cytoskeleton. The protein localises to the spindle. Binds the telomeric double-stranded 5'-TTAGGG-3' repeat and negatively regulates telomere length. Involved in the regulation of the mitotic spindle. Component of the shelterin complex (telosome) that is involved in the regulation of telomere length and protection. Shelterin associates with arrays of double-stranded 5'-TTAGGG-3' repeats added by telomerase and protects chromosome ends; without its protective activity, telomeres are no longer hidden from the DNA damage surveillance and chromosome ends are inappropriately processed by DNA repair pathways. The polypeptide is Telomeric repeat-binding factor 1 (Terf1) (Mus musculus (Mouse)).